A 255-amino-acid chain; its full sequence is Sporulation-specific N-acetylmuramoyl-L-alanine amidase (255 aa).

Residues 4–172 (IFIDPGHGGS…LARGHANGLE (169 aa)) form the MurNAc-LAA domain. H10, E24, and H79 together coordinate Zn(2+). Residue E141 is part of the active site. The region spanning 180 to 254 (TSSSGLYKVQ…AGFDAIVILE (75 aa)) is the SPOR domain. 2 repeat units span residues 184 to 219 (GLYKVQIGAFKVKANADSLASNAEAKGFDSIVLLKD) and 220 to 255 (GLYKVQIGAFSSKDNADTLAARAKNAGFDAIVILES). The segment at 184–255 (GLYKVQIGAF…GFDAIVILES (72 aa)) is 2 X 35 AA approximate tandem repeats.

Belongs to the N-acetylmuramoyl-L-alanine amidase 3 family. Requires Zn(2+) as cofactor.

The protein localises to the secreted. It localises to the cell wall. It carries out the reaction Hydrolyzes the link between N-acetylmuramoyl residues and L-amino acid residues in certain cell-wall glycopeptides.. With respect to regulation, inhibited by EDTA. Its function is as follows. Autolysins are involved in some important biological processes such as cell separation, cell-wall turnover, competence for genetic transformation, formation of the flagella - in particular of its basal body - and sporulation. CwlC is able to hydrolyze type A cell walls such as B.subtilis. Its main function is to lyze the mother cell wall peptidoglycan, playing a role during sporulation. This Bacillus subtilis (strain 168) protein is Sporulation-specific N-acetylmuramoyl-L-alanine amidase (cwlC).